The chain runs to 338 residues: 1-aminocyclopropane-1-carboxylate deaminase (338 aa).

Residue lysine 51 is modified to N6-(pyridoxal phosphate)lysine. The active-site Nucleophile is the serine 78.

Belongs to the ACC deaminase/D-cysteine desulfhydrase family. In terms of assembly, homotrimer. Requires pyridoxal 5'-phosphate as cofactor.

It catalyses the reaction 1-aminocyclopropane-1-carboxylate + H2O = 2-oxobutanoate + NH4(+). Functionally, catalyzes a cyclopropane ring-opening reaction, the irreversible conversion of 1-aminocyclopropane-1-carboxylate (ACC) to ammonia and alpha-ketobutyrate. Allows growth on ACC as a nitrogen source. The sequence is that of 1-aminocyclopropane-1-carboxylate deaminase from Pseudomonas syringae pv. syringae (strain B728a).